The following is a 156-amino-acid chain: MVRKKSSNTLAENRKARHEYFIEETIEAGIALVGTEVKSIRNGRANLKESYADIRNGEIFILSMHISPYEQGNIFNVEPLREKKLLLHKSEIHRLAGLVSRDGYTLIPLTLYLKAGKVKVALGICKGKKDYDKRDSMLEKAHNREMQRALKERSRY.

Belongs to the SmpB family.

It localises to the cytoplasm. Functionally, required for rescue of stalled ribosomes mediated by trans-translation. Binds to transfer-messenger RNA (tmRNA), required for stable association of tmRNA with ribosomes. tmRNA and SmpB together mimic tRNA shape, replacing the anticodon stem-loop with SmpB. tmRNA is encoded by the ssrA gene; the 2 termini fold to resemble tRNA(Ala) and it encodes a 'tag peptide', a short internal open reading frame. During trans-translation Ala-aminoacylated tmRNA acts like a tRNA, entering the A-site of stalled ribosomes, displacing the stalled mRNA. The ribosome then switches to translate the ORF on the tmRNA; the nascent peptide is terminated with the 'tag peptide' encoded by the tmRNA and targeted for degradation. The ribosome is freed to recommence translation, which seems to be the essential function of trans-translation. In Clostridium botulinum (strain Alaska E43 / Type E3), this protein is SsrA-binding protein.